We begin with the raw amino-acid sequence, 447 residues long: N-succinylarginine dihydrolase (447 aa).

Substrate-binding positions include 19–28 (AGLSFGNEAS), Asn-110, and 137–138 (HR). Residue Glu-174 is part of the active site. Arg-212 is a binding site for substrate. His-248 is a catalytic residue. Residues Asp-250 and Asn-359 each contribute to the substrate site. Cys-365 serves as the catalytic Nucleophile.

Belongs to the succinylarginine dihydrolase family. Homodimer.

The catalysed reaction is N(2)-succinyl-L-arginine + 2 H2O + 2 H(+) = N(2)-succinyl-L-ornithine + 2 NH4(+) + CO2. It participates in amino-acid degradation; L-arginine degradation via AST pathway; L-glutamate and succinate from L-arginine: step 2/5. In terms of biological role, catalyzes the hydrolysis of N(2)-succinylarginine into N(2)-succinylornithine, ammonia and CO(2). The sequence is that of N-succinylarginine dihydrolase from Escherichia coli O6:K15:H31 (strain 536 / UPEC).